A 427-amino-acid polypeptide reads, in one-letter code: 3-phosphoshikimate 1-carboxyvinyltransferase (427 aa).

Residues Lys-22, Ser-23, and Arg-27 each contribute to the 3-phosphoshikimate site. Residue Lys-22 coordinates phosphoenolpyruvate. Residues Gly-96 and Arg-124 each contribute to the phosphoenolpyruvate site. Residues Ser-169, Ser-170, Gln-171, Ser-197, Asp-313, Asn-336, and Lys-340 each coordinate 3-phosphoshikimate. Gln-171 provides a ligand contact to phosphoenolpyruvate. The Proton acceptor role is filled by Asp-313. Residues Arg-344, Arg-386, and Lys-411 each contribute to the phosphoenolpyruvate site.

Belongs to the EPSP synthase family. In terms of assembly, monomer.

Its subcellular location is the cytoplasm. It catalyses the reaction 3-phosphoshikimate + phosphoenolpyruvate = 5-O-(1-carboxyvinyl)-3-phosphoshikimate + phosphate. Its pathway is metabolic intermediate biosynthesis; chorismate biosynthesis; chorismate from D-erythrose 4-phosphate and phosphoenolpyruvate: step 6/7. Its function is as follows. Catalyzes the transfer of the enolpyruvyl moiety of phosphoenolpyruvate (PEP) to the 5-hydroxyl of shikimate-3-phosphate (S3P) to produce enolpyruvyl shikimate-3-phosphate and inorganic phosphate. The polypeptide is 3-phosphoshikimate 1-carboxyvinyltransferase (Citrobacter koseri (strain ATCC BAA-895 / CDC 4225-83 / SGSC4696)).